Here is a 332-residue protein sequence, read N- to C-terminus: Myogenic-determination protein (332 aa).

The tract at residues 22–54 (HNGYGQPTHPGYGFSAYSQQNPIAHPGQNPHQT) is disordered. In terms of domain architecture, bHLH spans 161–212 (DRRKAATMRERRRLRKVNEAFEILKRRTSSNPNQRLPKVEILRNAIEYIESL). The span at 293–309 (TTSPIQNKATPSASDTQ) shows a compositional bias: polar residues. A disordered region spans residues 293–332 (TTSPIQNKATPSASDTQSPPSSGATAPTSLHVNFKRKCST). Residues 310-321 (SPPSSGATAPTS) are compositionally biased toward low complexity.

As to quaternary structure, efficient DNA binding requires dimerization with another bHLH protein.

Its subcellular location is the nucleus. In terms of biological role, may play an important role in the early development of muscle. The protein is Myogenic-determination protein (nau) of Drosophila melanogaster (Fruit fly).